We begin with the raw amino-acid sequence, 620 residues long: Translation initiation factor IF-2 (620 aa).

The region spanning 119-288 (ERPPIVTIMG…IILISELENL (170 aa)) is the tr-type G domain. A G1 region spans residues 128–135 (GHVDHGKT). Residue 128–135 (GHVDHGKT) coordinates GTP. A G2 region spans residues 153 to 157 (GITQA). The segment at 175-178 (DTPG) is G3. Residues 175 to 179 (DTPGH) and 229 to 232 (NKID) each bind GTP. The G4 stretch occupies residues 229–232 (NKID). Positions 265–267 (SAI) are G5.

This sequence belongs to the TRAFAC class translation factor GTPase superfamily. Classic translation factor GTPase family. IF-2 subfamily.

It localises to the cytoplasm. In terms of biological role, one of the essential components for the initiation of protein synthesis. Protects formylmethionyl-tRNA from spontaneous hydrolysis and promotes its binding to the 30S ribosomal subunits. Also involved in the hydrolysis of GTP during the formation of the 70S ribosomal complex. The chain is Translation initiation factor IF-2 from Mycoplasma mycoides subsp. mycoides SC (strain CCUG 32753 / NCTC 10114 / PG1).